Consider the following 629-residue polypeptide: Neuronal acetylcholine receptor subunit alpha-4 (629 aa).

The signal sequence occupies residues 1-30 (MEIGGSGAPPPLLLLPLLLLLGTGLLPASS). Over 32-249 (IETRAHAEER…IIRRLPLFYT (218 aa)) the chain is Extracellular. Asparagine 59 carries N-linked (GlcNAc...) asparagine glycosylation. Positions 78 and 80 each coordinate Ca(2+). 2 N-linked (GlcNAc...) asparagine glycosylation sites follow: asparagine 109 and asparagine 176. 2 disulfide bridges follow: cysteine 163/cysteine 177 and cysteine 227/cysteine 228. A helical transmembrane segment spans residues 250–270 (INLIIPCLLISCLTVLVFYLP). The S-palmitoyl cysteine moiety is linked to residue cysteine 273. 2 helical membrane passes run 279 to 299 (LCISVLLSLTVFLLLITEIIP) and 312 to 332 (LLFTMIFVTLSIVITVFVLNV). Topologically, residues 333–603 (HHRSPRTHTM…KYVAMVIDRI (271 aa)) are cytoplasmic. Disordered regions lie at residues 420 to 459 (ETQPTCRSPSHKVPDLKTSEVEKASPCPSPGSCHPPNSSG) and 503 to 529 (SLTESKPTGSPASLKTRPSQLPVSDQT). Position 427 is a phosphoserine (serine 427). Over residues 431 to 442 (KVPDLKTSEVEK) the composition is skewed to basic and acidic residues. Positions 449 to 459 (PGSCHPPNSSG) are enriched in low complexity. Positions 504–529 (LTESKPTGSPASLKTRPSQLPVSDQT) are enriched in polar residues. A phosphoserine mark is found at serine 540 and serine 543. The helical transmembrane segment at 604 to 624 (FLWMFIIVCLLGTVGLFLPPW) threads the bilayer.

It belongs to the ligand-gated ion channel (TC 1.A.9) family. Acetylcholine receptor (TC 1.A.9.1) subfamily. Alpha-4/CHRNA4 sub-subfamily. As to quaternary structure, neuronal AChR is composed of two different types of subunits: alpha and beta. CHRNA4 forms heteropentameric neuronal acetylcholine receptors with CHRNB2 and CHRNB4, as well as CHRNA5 and CHRNB3 as accesory subunits. Found in two major stoichiometric forms, LS (low agonist sensitivity): (CHRNA4)3:(CHRNB2)2 and HS (high agonist sensitivity): (CHRNA4)2:(CHRNB2)3, the two stoichiometric forms differ in their unitary conductance, calcium permeability, ACh sensitivity and potentiation by divalent cation. Cells produce predominantly an (CHRNA4)3:(CHRNB2)2 nAChR. The (CHRNA4)2:(CHRNB2)3 expression is selectively up-regulated by nicotine and has lower single channel conductance and calcium permeability. In the striatum, also forms CHRNA4:CHRNA6:CHRNB2 complexes. Also found in the stoichiometric form: (CHRNA4:CHRNB2)2:CHRNB3. Interacts with RIC3; which is required for proper folding and assembly. Interacts with LYPD6.

Its subcellular location is the synaptic cell membrane. The protein resides in the cell membrane. It catalyses the reaction K(+)(in) = K(+)(out). The enzyme catalyses Na(+)(in) = Na(+)(out). It carries out the reaction Ca(2+)(in) = Ca(2+)(out). Its activity is regulated as follows. Activated by a myriad of ligands such as acetylcholine, cytisine, nicotine, choline and epibatidine. Channel potentiation by calcium is stoichiometry-selective, CHRNA4:CHRNB2 nACh receptor is achieved by calcium association with topographically distinct sites framed by anionic residues within the CHRNA4 subunit and between the CHRNA4 and CHRNB2 subunits. nAChR activity is inhibited by the antagonist alpha-conotoxins BuIA, PnIA, GID and MII, small disulfide-constrained peptides from cone snails. In terms of biological role, component of neuronal acetylcholine receptors (nAChRs) that function as pentameric, ligand-gated cation channels with high calcium permeability among other activities. nAChRs are excitatory neurotrasnmitter receptors formed by a collection of nAChR subunits known to mediate synaptic transmission in the nervous system and the neuromuscular junction. Each nAchR subunit confers differential attributes to channel properties, including activation, deactivation and desensitization kinetics, pH sensitivity, cation permeability, and binding to allosteric modulators. CHRNA4 forms heteropentameric neuronal acetylcholine receptors with CHRNB2 and CHRNB4, as well as CHRNA5 and CHRNB3 as accesory subunits. Is the most abundant nAChR subtype expressed in the central nervous system. Found in two major stoichiometric forms,(CHRNA4)3:(CHRNB2)2 and (CHRNA4)2:(CHRNB2)3, the two stoichiometric forms differ in their unitary conductance, calcium permeability, ACh sensitivity and potentiation by divalent cation. Involved in the modulation of calcium-dependent signaling pathways, influences the release of neurotransmitters, including dopamine, glutamate and GABA. This is Neuronal acetylcholine receptor subunit alpha-4 (Chrna4) from Mus musculus (Mouse).